The chain runs to 256 residues: Thiazole synthase (256 aa).

Lys95 serves as the catalytic Schiff-base intermediate with DXP. 1-deoxy-D-xylulose 5-phosphate contacts are provided by residues Gly156, 182–183 (AG), and 204–205 (NT).

Belongs to the ThiG family. Homotetramer. Forms heterodimers with either ThiH or ThiS.

The protein resides in the cytoplasm. It catalyses the reaction [ThiS sulfur-carrier protein]-C-terminal-Gly-aminoethanethioate + 2-iminoacetate + 1-deoxy-D-xylulose 5-phosphate = [ThiS sulfur-carrier protein]-C-terminal Gly-Gly + 2-[(2R,5Z)-2-carboxy-4-methylthiazol-5(2H)-ylidene]ethyl phosphate + 2 H2O + H(+). It functions in the pathway cofactor biosynthesis; thiamine diphosphate biosynthesis. Functionally, catalyzes the rearrangement of 1-deoxy-D-xylulose 5-phosphate (DXP) to produce the thiazole phosphate moiety of thiamine. Sulfur is provided by the thiocarboxylate moiety of the carrier protein ThiS. In vitro, sulfur can be provided by H(2)S. This Escherichia coli O127:H6 (strain E2348/69 / EPEC) protein is Thiazole synthase.